The primary structure comprises 74 residues: Conotoxin SIIID (74 aa).

Positions 1–20 are cleaved as a signal peptide; it reads MMSKLGVLLTVCLLLFPLTA. Positions 21 to 53 are excised as a propeptide; the sequence is LPLDGDQPADQLEDRMQDDISSEQYPSFVRRQK. Cystine bridges form between Cys-54–Cys-71, Cys-55–Cys-73, and Cys-61–Cys-74.

It belongs to the conotoxin M superfamily. Post-translationally, three disulfide isomers have been synthesized and tested. SIIID with the disulfide pairing 1-4;2-5;3-6 is the most active. Expressed by the venom duct.

Its subcellular location is the secreted. Functionally, the short synthetic peptide SIIID (range 54-74, with disulfide pairing 1-4, 2-5 and 3-6) reversibly inhibits human alpha-7/CHRNA7 acetylcholine receptor (IC(50)=880 nM). Shows a paralytic effect in fish. This chain is Conotoxin SIIID, found in Conus striatus (Striated cone).